The sequence spans 454 residues: Bifunctional protein GlmU (454 aa).

The tract at residues Met-1–Arg-226 is pyrophosphorylase. Residues Leu-8–Gly-11, Lys-22, Gln-73, Gly-78–Thr-79, Tyr-99–Asp-101, Gly-136, Glu-151, Asn-166, and Asn-224 each bind UDP-N-acetyl-alpha-D-glucosamine. Asp-101 contacts Mg(2+). Mg(2+) is bound at residue Asn-224. The segment at Met-227 to Gln-247 is linker. An N-acetyltransferase region spans residues Gly-248–Lys-454. UDP-N-acetyl-alpha-D-glucosamine is bound by residues Arg-330 and Lys-348. His-360 acts as the Proton acceptor in catalysis. Tyr-363 and Asn-374 together coordinate UDP-N-acetyl-alpha-D-glucosamine. Residues Ala-377, Asn-383 to Tyr-384, Ser-402, Ala-420, and Arg-437 each bind acetyl-CoA.

It in the N-terminal section; belongs to the N-acetylglucosamine-1-phosphate uridyltransferase family. This sequence in the C-terminal section; belongs to the transferase hexapeptide repeat family. As to quaternary structure, homotrimer. It depends on Mg(2+) as a cofactor.

It is found in the cytoplasm. The catalysed reaction is alpha-D-glucosamine 1-phosphate + acetyl-CoA = N-acetyl-alpha-D-glucosamine 1-phosphate + CoA + H(+). It catalyses the reaction N-acetyl-alpha-D-glucosamine 1-phosphate + UTP + H(+) = UDP-N-acetyl-alpha-D-glucosamine + diphosphate. The protein operates within nucleotide-sugar biosynthesis; UDP-N-acetyl-alpha-D-glucosamine biosynthesis; N-acetyl-alpha-D-glucosamine 1-phosphate from alpha-D-glucosamine 6-phosphate (route II): step 2/2. It participates in nucleotide-sugar biosynthesis; UDP-N-acetyl-alpha-D-glucosamine biosynthesis; UDP-N-acetyl-alpha-D-glucosamine from N-acetyl-alpha-D-glucosamine 1-phosphate: step 1/1. Its pathway is bacterial outer membrane biogenesis; LPS lipid A biosynthesis. Its function is as follows. Catalyzes the last two sequential reactions in the de novo biosynthetic pathway for UDP-N-acetylglucosamine (UDP-GlcNAc). The C-terminal domain catalyzes the transfer of acetyl group from acetyl coenzyme A to glucosamine-1-phosphate (GlcN-1-P) to produce N-acetylglucosamine-1-phosphate (GlcNAc-1-P), which is converted into UDP-GlcNAc by the transfer of uridine 5-monophosphate (from uridine 5-triphosphate), a reaction catalyzed by the N-terminal domain. The sequence is that of Bifunctional protein GlmU from Pseudomonas aeruginosa (strain LESB58).